We begin with the raw amino-acid sequence, 227 residues long: MGWTMRLVTAALLLGLMMVVTGDEDENSPCAHEALLDEDTLFCQGLEVFYPELGNIGCKVVPDCNNYRQKITSWMEPIVKFPGAVDGATYILVMVDPDAPSRAEPRQRFWRHWLVTDIKGADLKKGKIQGQELSAYQAPSPPAHSGFHRYQFFVYLQEGKVISLLPKENKTRGSWKMDRFLNRFHLGEPEASTQFMTQNYQDSPTLQAPRERASEPKHKNQAEIAAC.

The N-terminal stretch at Met-1 to Gly-22 is a signal peptide. N-linked (GlcNAc...) (complex) asparagine glycosylation is present at Asn-169. The important for secretion stretch occupies residues Glu-188–Cys-227. Residues Asp-202 to Cys-227 form a disordered region. Residues Pro-209–Gln-221 show a composition bias toward basic and acidic residues.

This sequence belongs to the phosphatidylethanolamine-binding protein family.

Its subcellular location is the secreted. Its function is as follows. Promotes AKT phosphorylation, suggesting a possible role in the PI3K-AKT signaling pathway. The polypeptide is Phosphatidylethanolamine-binding protein 4 (PEBP4) (Homo sapiens (Human)).